The following is a 717-amino-acid chain: Proline-rich receptor-like protein kinase PERK2 (717 aa).

Residues 1-197 (MSSAPPPGGT…GSLSPPPPAS (197 aa)) show a composition bias toward pro residues. The segment at 1 to 221 (MSSAPPPGGT…GSSPPAQSSK (221 aa)) is disordered. The Extracellular segment spans residues 1–228 (MSSAPPPGGT…SSKELSKGAM (228 aa)). Over residues 198–220 (PSGGRSPSTPSTTPGSSPPAQSS) the composition is skewed to low complexity. A helical transmembrane segment spans residues 229–249 (VGIAIGGGFVLLVALALIFFL). Topologically, residues 250 to 717 (CKKKRRRDNE…NIKRPGQGYG (468 aa)) are cytoplasmic. Residues 258-323 (NEAPPAPIDG…YDSNYSDQSV (66 aa)) form a disordered region. The segment covering 289 to 303 (VPPPKSPSSAPPRPP) has biased composition (pro residues). Residues 307–322 (SSGSSGDYDSNYSDQS) are compositionally biased toward low complexity. Residues 354–631 (FSEANLLGQG…QVARVLEGNI (278 aa)) form the Protein kinase domain. ATP-binding positions include 360–368 (LGQGGFGYV) and Lys382. Asp478 (proton acceptor) is an active-site residue. 2 stretches are compositionally biased toward polar residues: residues 632 to 644 (SPSD…TPGH) and 692 to 705 (SWSS…QGKA). 2 disordered regions span residues 632 to 665 (SPSD…DNEG) and 690 to 717 (YPSW…QGYG).

The protein belongs to the protein kinase superfamily. Ser/Thr protein kinase family. In terms of tissue distribution, mostly expressed in inflorescence bolt, flower buds and siliques, and, to a lower extent, in roots, seedlings and leaves.

The protein localises to the cell membrane. The enzyme catalyses L-seryl-[protein] + ATP = O-phospho-L-seryl-[protein] + ADP + H(+). It catalyses the reaction L-threonyl-[protein] + ATP = O-phospho-L-threonyl-[protein] + ADP + H(+). This chain is Proline-rich receptor-like protein kinase PERK2 (PERK2), found in Arabidopsis thaliana (Mouse-ear cress).